We begin with the raw amino-acid sequence, 213 residues long: Orotate phosphoribosyltransferase (213 aa).

Lysine 26 lines the 5-phospho-alpha-D-ribose 1-diphosphate pocket. Residue 34–35 participates in orotate binding; sequence FF. Residues 72-73, arginine 99, lysine 100, lysine 103, histidine 105, and 124-132 each bind 5-phospho-alpha-D-ribose 1-diphosphate; these read YK and DDVITAGTA. Positions 128 and 156 each coordinate orotate.

Belongs to the purine/pyrimidine phosphoribosyltransferase family. PyrE subfamily. In terms of assembly, homodimer. It depends on Mg(2+) as a cofactor.

The enzyme catalyses orotidine 5'-phosphate + diphosphate = orotate + 5-phospho-alpha-D-ribose 1-diphosphate. It functions in the pathway pyrimidine metabolism; UMP biosynthesis via de novo pathway; UMP from orotate: step 1/2. Its function is as follows. Catalyzes the transfer of a ribosyl phosphate group from 5-phosphoribose 1-diphosphate to orotate, leading to the formation of orotidine monophosphate (OMP). In Pectobacterium carotovorum subsp. carotovorum (strain PC1), this protein is Orotate phosphoribosyltransferase.